The primary structure comprises 196 residues: Cytochrome c biogenesis ATP-binding export protein CcmA (196 aa).

The region spanning 2–195 (LSFHQLKFNI…HIKSAQILQL (194 aa)) is the ABC transporter domain. 34 to 41 (GANGCGKT) serves as a coordination point for ATP.

Belongs to the ABC transporter superfamily. CcmA exporter (TC 3.A.1.107) family. As to quaternary structure, the complex is composed of two ATP-binding proteins (CcmA) and two transmembrane proteins (CcmB).

Its subcellular location is the cell inner membrane. It catalyses the reaction heme b(in) + ATP + H2O = heme b(out) + ADP + phosphate + H(+). Part of the ABC transporter complex CcmAB involved in the biogenesis of c-type cytochromes; once thought to export heme, this seems not to be the case, but its exact role is uncertain. Responsible for energy coupling to the transport system. This chain is Cytochrome c biogenesis ATP-binding export protein CcmA, found in Rickettsia bellii (strain RML369-C).